The chain runs to 352 residues: uncharacterized protein (352 aa).

The next 8 membrane-spanning stretches (helical) occupy residues 6 to 26 (FIFL…IINP), 30 to 50 (FHIV…IINI), 76 to 96 (IFLT…FVII), 151 to 171 (EFII…LPFL), 197 to 217 (FILV…LPLI), 226 to 246 (VKVD…IEGL), 291 to 311 (WLPI…ASFA), and 330 to 350 (LIGG…AKIF).

Belongs to the CitM (TC 2.A.11) transporter family.

It localises to the cell membrane. This is an uncharacterized protein from Methanocaldococcus jannaschii (strain ATCC 43067 / DSM 2661 / JAL-1 / JCM 10045 / NBRC 100440) (Methanococcus jannaschii).